A 147-amino-acid polypeptide reads, in one-letter code: Large ribosomal subunit protein bL9 (147 aa).

It belongs to the bacterial ribosomal protein bL9 family.

Functionally, binds to the 23S rRNA. The chain is Large ribosomal subunit protein bL9 from Natranaerobius thermophilus (strain ATCC BAA-1301 / DSM 18059 / JW/NM-WN-LF).